The chain runs to 122 residues: Nodulation protein NolR (122 aa).

The 95-residue stretch at 15–109 folds into the HTH arsR-type domain; sequence EKHEDAEIAA…ALSDIYGDDT (95 aa). The H-T-H motif DNA-binding region spans 49–68; that stretch reads VGALAHKVGLSQSALSQHLS.

In terms of assembly, binds to the operator site in homodimeric form.

In terms of biological role, negative transacting factor controlling the nod regulon. May control the expression of nodD1, nodD2, nodD3 and nodABC genes. This chain is Nodulation protein NolR (nolR), found in Rhizobium meliloti (Ensifer meliloti).